The following is a 139-amino-acid chain: Translation initiation factor 2 subunit beta (139 aa).

It belongs to the eIF-2-beta/eIF-5 family. As to quaternary structure, heterotrimer composed of an alpha, a beta and a gamma chain.

In terms of biological role, eIF-2 functions in the early steps of protein synthesis by forming a ternary complex with GTP and initiator tRNA. The sequence is that of Translation initiation factor 2 subunit beta from Nanoarchaeum equitans (strain Kin4-M).